Consider the following 193-residue polypeptide: Potassium-transporting ATPase KdpC subunit (193 aa).

The chain crosses the membrane as a helical span at residues 8–28; the sequence is VVLLIFLTLITGVAYPLLATG.

The protein belongs to the KdpC family. As to quaternary structure, the system is composed of three essential subunits: KdpA, KdpB and KdpC.

Its subcellular location is the cell inner membrane. Its function is as follows. Part of the high-affinity ATP-driven potassium transport (or Kdp) system, which catalyzes the hydrolysis of ATP coupled with the electrogenic transport of potassium into the cytoplasm. This subunit acts as a catalytic chaperone that increases the ATP-binding affinity of the ATP-hydrolyzing subunit KdpB by the formation of a transient KdpB/KdpC/ATP ternary complex. The polypeptide is Potassium-transporting ATPase KdpC subunit (Photorhabdus laumondii subsp. laumondii (strain DSM 15139 / CIP 105565 / TT01) (Photorhabdus luminescens subsp. laumondii)).